We begin with the raw amino-acid sequence, 678 residues long: THO complex subunit 5 homolog A (678 aa).

2 disordered regions span residues 1 to 35 (MASD…YSEE) and 294 to 329 (ALFK…VQLD). Positions 7-10 (KKRK) match the Nuclear localization signal motif. A compositionally biased stretch (basic and acidic residues) spans 14–35 (NRNEDVKRGRHEDQEGRYYSEE). The span at 301-314 (DSQDDESDSDAEEE) shows a compositional bias: acidic residues.

This sequence belongs to the THOC5 family. Component of the THO subcomplex, which is composed of thoc1, thoc2, thoc3, thoc5, thoc6 and thoc7. Component of the transcription/export (TREX) complex at least composed of alyref/thoc4, ddx39b, sarnp/cip29, chtop and the THO subcomplex. Interacts with thoc7.

It is found in the nucleus. The protein localises to the nucleus speckle. Its subcellular location is the cytoplasm. Its function is as follows. Component of the THO subcomplex of the TREX complex which is thought to couple mRNA transcription, processing and nuclear export, and which specifically associates with spliced mRNA and not with unspliced pre-mRNA. Plays a key structural role in the oligomerization of the THO-ddx39b complex. TREX is recruited to spliced mRNAs by a transcription-independent mechanism, binds to mRNA upstream of the exon-junction complex (EJC) and is recruited in a splicing- and cap-dependent manner to a region near the 5' end of the mRNA where it functions in mRNA export to the cytoplasm via the TAP/NXF1 pathway. May be involved in cell differentiation. The chain is THO complex subunit 5 homolog A (thoc5-a) from Xenopus laevis (African clawed frog).